Reading from the N-terminus, the 710-residue chain is NAD(P)H-quinone oxidoreductase subunit 5, chloroplastic (710 aa).

17 helical membrane passes run Trp-9–Phe-29, Trp-40–Ile-60, Ile-89–Ile-109, Phe-125–Ile-145, Ile-147–Thr-167, Gly-185–Phe-205, Val-221–Ser-241, Thr-258–Ala-278, Leu-280–Ile-300, Leu-327–Ile-347, Ala-354–Ser-374, Gly-396–Ser-416, Trp-425–Tyr-445, Met-519–Pro-539, Phe-571–Leu-591, Ser-657–Ile-676, and Ile-689–Lys-709.

This sequence belongs to the complex I subunit 5 family. As to quaternary structure, NDH is composed of at least 16 different subunits, 5 of which are encoded in the nucleus.

Its subcellular location is the plastid. It localises to the chloroplast thylakoid membrane. It catalyses the reaction a plastoquinone + NADH + (n+1) H(+)(in) = a plastoquinol + NAD(+) + n H(+)(out). The enzyme catalyses a plastoquinone + NADPH + (n+1) H(+)(in) = a plastoquinol + NADP(+) + n H(+)(out). Functionally, NDH shuttles electrons from NAD(P)H:plastoquinone, via FMN and iron-sulfur (Fe-S) centers, to quinones in the photosynthetic chain and possibly in a chloroplast respiratory chain. The immediate electron acceptor for the enzyme in this species is believed to be plastoquinone. Couples the redox reaction to proton translocation, and thus conserves the redox energy in a proton gradient. The polypeptide is NAD(P)H-quinone oxidoreductase subunit 5, chloroplastic (ndhF) (Ipomoea purpurea (Common morning glory)).